The sequence spans 192 residues: Probable nicotinate-nucleotide adenylyltransferase (192 aa).

This sequence belongs to the NadD family.

The catalysed reaction is nicotinate beta-D-ribonucleotide + ATP + H(+) = deamido-NAD(+) + diphosphate. The protein operates within cofactor biosynthesis; NAD(+) biosynthesis; deamido-NAD(+) from nicotinate D-ribonucleotide: step 1/1. Catalyzes the reversible adenylation of nicotinate mononucleotide (NaMN) to nicotinic acid adenine dinucleotide (NaAD). This is Probable nicotinate-nucleotide adenylyltransferase from Cytophaga hutchinsonii (strain ATCC 33406 / DSM 1761 / CIP 103989 / NBRC 15051 / NCIMB 9469 / D465).